Here is a 461-residue protein sequence, read N- to C-terminus: MDYKETAKRLIELLGGKENIISAAHCATRLRLVMKDESKIDQAQVEELDGVKGAFSSSGQYQIIFGTGLVNKVFDAFSKEADIEREEHVNHQDAAKEKLNPAARFAKTLSNIFVPIIPAIVASGLLMGLLGMINAFHWMSKDSALLQLLDMFSSAAFIFLPILIGVSASKEFGSNPYLGAVIGGIMIHPNLLNPWGLAEATPDYMHLFGFDIALLGYQGTVIPVLLAVYVMSKVEKWTRKVVPHAVDLLVTPFVTVIVTGFVAFIAIGPLGRALGSGITVALTYVYDHAGFVAGLIFGGTYSLIVLTGVHHSFHAIEAGLIADIGKNYLLPIWSMANVAQGGAGLAVFFMAKKAKTKEIALPAAFSAFLGITEPVIFGVNLRYRKPFIAAMIGGALGGAYVVFTHVAANAYGLTGIPMIAIAAPFGFSNLIHYLIGMAIAAVSAFIAAFVMKINEDEERKK.

A PTS EIIB type-1 domain is found at 4-87 (KETAKRLIEL…SKEADIEREE (84 aa)). The active-site Phosphocysteine intermediate; for EIIB activity is the cysteine 26. Residues 107 to 461 (KTLSNIFVPI…KINEDEERKK (355 aa)) form the PTS EIIC type-1 domain. A run of 10 helical transmembrane segments spans residues 112-132 (IFVP…LLGM), 148-168 (LLDM…GVSA), 178-198 (LGAV…WGLA), 208-228 (FGFD…LLAV), 248-268 (LLVT…IAIG), 289-309 (AGFV…LTGV), 329-349 (LLPI…AVFF), 359-379 (IALP…IFGV), 387-407 (FIAA…THVA), and 430-450 (LIHY…AAFV).

Its subcellular location is the cell membrane. The enzyme catalyses N(pros)-phospho-L-histidyl-[protein](out) + sucrose = sucrose 6(G)-phosphate(in) + L-histidyl-[protein]. Functionally, the phosphoenolpyruvate-dependent sugar phosphotransferase system (sugar PTS), a major carbohydrate active transport system, catalyzes the phosphorylation of incoming sugar substrates concomitantly with their translocation across the cell membrane. This system is involved in sucrose transport. In Bacillus subtilis (strain 168), this protein is PTS system sucrose-specific EIIBC component (sacP).